The following is a 289-amino-acid chain: Dihydropteroate synthase (289 aa).

Residues 28–282 form the Pterin-binding domain; sequence TYVMGILNTT…DVEAMAQICK (255 aa). N35 contacts Mg(2+). (7,8-dihydropterin-6-yl)methyl diphosphate-binding positions include T75, D109, N128, D199, K235, and 270–272; that span reads RVH.

The protein belongs to the DHPS family. It depends on Mg(2+) as a cofactor.

It carries out the reaction (7,8-dihydropterin-6-yl)methyl diphosphate + 4-aminobenzoate = 7,8-dihydropteroate + diphosphate. It functions in the pathway cofactor biosynthesis; tetrahydrofolate biosynthesis; 7,8-dihydrofolate from 2-amino-4-hydroxy-6-hydroxymethyl-7,8-dihydropteridine diphosphate and 4-aminobenzoate: step 1/2. Functionally, catalyzes the condensation of para-aminobenzoate (pABA) with 6-hydroxymethyl-7,8-dihydropterin diphosphate (DHPt-PP) to form 7,8-dihydropteroate (H2Pte), the immediate precursor of folate derivatives. The protein is Dihydropteroate synthase (folP) of Synechocystis sp. (strain ATCC 27184 / PCC 6803 / Kazusa).